Consider the following 115-residue polypeptide: uncharacterized protein (115 aa).

The next 2 helical transmembrane spans lie at 15-35 (FSTQ…EVLF) and 52-72 (FDGV…YYSI).

The protein resides in the membrane. This is an uncharacterized protein from Saccharomyces cerevisiae (strain ATCC 204508 / S288c) (Baker's yeast).